A 220-amino-acid polypeptide reads, in one-letter code: Recombination protein RecR (220 aa).

A C4-type zinc finger spans residues 57 to 72 (CPICFNITDAEKCDVC). A Toprim domain is found at 80–173 (RTICVVEEPG…AISRIAYGVP (94 aa)). The segment at 190 to 220 (LTGRQTVSKPQPPQRPGDEDGADGAAVPASR) is disordered.

It belongs to the RecR family.

Its function is as follows. May play a role in DNA repair. It seems to be involved in an RecBC-independent recombinational process of DNA repair. It may act with RecF and RecO. The polypeptide is Recombination protein RecR (Deinococcus radiodurans (strain ATCC 13939 / DSM 20539 / JCM 16871 / CCUG 27074 / LMG 4051 / NBRC 15346 / NCIMB 9279 / VKM B-1422 / R1)).